Here is a 185-residue protein sequence, read N- to C-terminus: Ribosome-recycling factor (185 aa).

This sequence belongs to the RRF family.

The protein resides in the cytoplasm. Responsible for the release of ribosomes from messenger RNA at the termination of protein biosynthesis. May increase the efficiency of translation by recycling ribosomes from one round of translation to another. The protein is Ribosome-recycling factor of Frankia casuarinae (strain DSM 45818 / CECT 9043 / HFP020203 / CcI3).